Consider the following 344-residue polypeptide: Probable nicotinate-nucleotide adenylyltransferase/Ap4A hydrolase (344 aa).

Positions 1 to 182 (MIFGGAFDPL…YIHQHNIYLK (182 aa)) are naMN adenylyltransferase. The ap4A hydrolase stretch occupies residues 191–344 (EPRMQHCLRV…LKYVRSLQKN (154 aa)). The region spanning 193 to 304 (RMQHCLRVGQ…IYLADKLEPM (112 aa)) is the HD domain. His196 serves as a coordination point for ADP. Fe cation-binding residues include His196, His225, and Asp226. ADP contacts are provided by residues 226–229 (DLAK), His255, 281–282 (HT), Asp299, and Arg305. Residue Asp299 participates in Fe cation binding.

This sequence in the N-terminal section; belongs to the NadD family. In the C-terminal section; belongs to the Ap4A hydrolase YqeK family.

The enzyme catalyses nicotinate beta-D-ribonucleotide + ATP + H(+) = deamido-NAD(+) + diphosphate. It catalyses the reaction P(1),P(4)-bis(5'-adenosyl) tetraphosphate + H2O = 2 ADP + 2 H(+). The protein operates within cofactor biosynthesis; NAD(+) biosynthesis; deamido-NAD(+) from nicotinate D-ribonucleotide: step 1/1. Catalyzes the reversible adenylation of nicotinate mononucleotide (NaMN) to nicotinic acid adenine dinucleotide (NaAD). Functionally, hydrolyzes diadenosine 5',5'''-P1,P4-tetraphosphate (Ap4A) to yield ADP. The sequence is that of Probable nicotinate-nucleotide adenylyltransferase/Ap4A hydrolase from Mycoplasma pneumoniae (strain ATCC 29342 / M129 / Subtype 1) (Mycoplasmoides pneumoniae).